Here is a 396-residue protein sequence, read N- to C-terminus: MSEYSLFTSESVSEGHPDKIADQISDAVLDAIITQDKYARVACETLVKTGVAIIAGEVTTSAWVDLEELVRKVIIDIGYNSSDVGFDGATCAVMNIIGKQSVDIAQGVDRSKPEDQGAGDQGLMFGYASNETDVLMPAPICFSHRLVERQAEARKSGLLPWLRPDAKSQVTCRYENGKVVGIDAVVLSTQHNPEVSQKDLQEAVMELIVKHTLPAELLHKDTQYHINPTGNFIIGGPVGDCGLTGRKIIVDSYGGMARHGGGAFSGKDPSKVDRSAAYAGRYVAKNIVAAGLAERCEIQVSYAIGVAQPTSISINTFGTGKVSDDKIIQLVRECFDLRPYAITKMLDLLHPMYQETAAYGHFGRTPQQKTVGDDTFTTFTWERTDRAQSLRDAAGL.

H16 serves as a coordination point for ATP. D18 serves as a coordination point for Mg(2+). A K(+)-binding site is contributed by E44. The L-methionine site is built by E57 and Q100. The segment at 100–110 is flexible loop; the sequence is QSVDIAQGVDR. ATP contacts are provided by residues 165 to 167, D240, 246 to 247, A263, and K267; these read DAK and RK. L-methionine is bound at residue D240. K271 lines the L-methionine pocket.

Belongs to the AdoMet synthase family. Homotetramer; dimer of dimers. Requires Mg(2+) as cofactor. K(+) is required as a cofactor.

Its subcellular location is the cytoplasm. It carries out the reaction L-methionine + ATP + H2O = S-adenosyl-L-methionine + phosphate + diphosphate. Its pathway is amino-acid biosynthesis; S-adenosyl-L-methionine biosynthesis; S-adenosyl-L-methionine from L-methionine: step 1/1. Its function is as follows. Catalyzes the formation of S-adenosylmethionine (AdoMet) from methionine and ATP. The overall synthetic reaction is composed of two sequential steps, AdoMet formation and the subsequent tripolyphosphate hydrolysis which occurs prior to release of AdoMet from the enzyme. This is S-adenosylmethionine synthase from Pseudomonas putida (strain W619).